The primary structure comprises 941 residues: Isoleucine--tRNA ligase (941 aa).

Positions 58–68 match the 'HIGH' region motif; that stretch reads PYANGNIHLGH. Position 564 (glutamate 564) interacts with L-isoleucyl-5'-AMP. Positions 605–609 match the 'KMSKS' region motif; that stretch reads KMSKS. Residue lysine 608 participates in ATP binding. The Zn(2+) site is built by cysteine 904, cysteine 907, cysteine 924, and cysteine 927.

It belongs to the class-I aminoacyl-tRNA synthetase family. IleS type 1 subfamily. As to quaternary structure, monomer. Zn(2+) is required as a cofactor.

Its subcellular location is the cytoplasm. It carries out the reaction tRNA(Ile) + L-isoleucine + ATP = L-isoleucyl-tRNA(Ile) + AMP + diphosphate. Functionally, catalyzes the attachment of isoleucine to tRNA(Ile). As IleRS can inadvertently accommodate and process structurally similar amino acids such as valine, to avoid such errors it has two additional distinct tRNA(Ile)-dependent editing activities. One activity is designated as 'pretransfer' editing and involves the hydrolysis of activated Val-AMP. The other activity is designated 'posttransfer' editing and involves deacylation of mischarged Val-tRNA(Ile). This chain is Isoleucine--tRNA ligase, found in Hahella chejuensis (strain KCTC 2396).